Here is a 454-residue protein sequence, read N- to C-terminus: UPF0210 protein Mlab_1030 (454 aa).

It belongs to the UPF0210 family.

The polypeptide is UPF0210 protein Mlab_1030 (Methanocorpusculum labreanum (strain ATCC 43576 / DSM 4855 / Z)).